We begin with the raw amino-acid sequence, 4450 residues long: Gramicidin S synthase 2 (4450 aa).

Residues 467 to 1044 (DKTIHQLFTE…IQEISNYING (578 aa)) form a domain 1 (proline-activating) region. Carrier domains follow at residues 971–1046 (VPTN…NGAK), 2006–2081 (APSS…ADGE), 3051–3126 (APRT…EETD), and 4089–4164 (APRN…THQE). O-(pantetheine 4'-phosphoryl)serine occurs at positions 1006, 2041, 3086, and 4124. The tract at residues 1521–2080 (DHVAVGWKDQ…SALAQYIADG (560 aa)) is domain 2 (valine-activating). The tract at residues 2538 to 3134 (YATNKIFHEL…TDTEQYMAIQ (597 aa)) is domain 3 (ornithine-activating). The domain 4 (leucine-activating) stretch occupies residues 3590-4172 (IQELFEEQVK…QESENNVHQP (583 aa)).

Belongs to the ATP-dependent AMP-binding enzyme family. Large multienzyme complex of GrsA and GrsB. It depends on pantetheine 4'-phosphate as a cofactor.

The protein operates within antibiotic biosynthesis; gramicidin S biosynthesis. In terms of biological role, this protein is a multifunctional enzyme, able to activate and polymerize the amino acids Pro, Val, Orn and Leu. Activation sites for these AA consist of individual domains. This is Gramicidin S synthase 2 (grsB) from Brevibacillus brevis (Bacillus brevis).